The primary structure comprises 768 residues: MFLNNQNFENRSSRSSSNINSSETIVDLKNPQIIYKIRLESVNNDNLLNLDLDKSESHTGGEQHLELSSPPKLDKKSKNFNKIHDLVDSKKNKNRQRKKIKTKIHIDDDDDNFRDSNSNVSQTAGDLAISLMRPPKPKVEVVKKLTSNKKSIRQKKVAVTPSQNSASIQSNSPPESISITNPLTIQELSKLICVQETDIIKYLFLKRISVTMNQTIDASIISSVADNFGIAVESNVKENNNGLSSNLDNSNAFYETGNYIKRPPIVTVMGHVDHGKTTLLDYIRKSNNANKEIGGITQAIAAYEVEYIKKDNKQKIVFLDTPGHEAFTSMRSRGANLTDVAIIIIAADDGVKPQTIEAINHIQKANVPFVIAISKIDKAGSNTDIIEQDLLKYNVMSEKLGGQVPIIPISSLTGQNVDKLLETITLLAELEDLKADPTQPAQGIIIEAHLDKSHGPVATLLIQNGTLNISDNLVIGSAYAKIRVIINNAKEKINLAIPSSVVEIWGLSSVPATGEIALAVKSDKEAKLKAIENTSKDSSIIQKQRALNSRITLDTLKNTNSKDISKQISLIIKTDNQGSTEAILDSLSQFPQSKVQLNVVSIMPGEITATDVELASTTNSTLIGFNTNFAPGTKQASAKSNILIENYQIIYALIEDIKRRMEDLLDPEYSEVPVGEAEVSTVFSLANRKIAGCRVINNKLLKNSWIKVIREEKVIYQGKIESLKRVREDVEEIQAGNECGIFISEFQLWQSGDKIHSFDLIPKQKSLF.

Disordered stretches follow at residues Met-1–Asn-20, Lys-54–Ser-77, and Lys-155–Ser-176. Over residues Lys-54–Leu-65 the composition is skewed to basic and acidic residues. A compositionally biased stretch (polar residues) spans Thr-160–Ser-176. The tr-type G domain occupies Lys-261–Lys-434. GTP is bound by residues Gly-270–Thr-277, Asp-320–His-324, and Ser-374–Asp-377.

The protein belongs to the TRAFAC class translation factor GTPase superfamily. Classic translation factor GTPase family. IF-2 subfamily.

The protein localises to the plastid. It localises to the chloroplast. Its function is as follows. One of the essential components for the initiation of protein synthesis. Protects formylmethionyl-tRNA from spontaneous hydrolysis and promotes its binding to the 30S ribosomal subunits. Also involved in the hydrolysis of GTP during the formation of the 70S ribosomal complex. The chain is Translation initiation factor IF-2, chloroplastic (infB) from Pyropia yezoensis (Susabi-nori).